We begin with the raw amino-acid sequence, 154 residues long: UPF0225 protein YpsIP31758_1970 (154 aa).

The protein belongs to the UPF0225 family.

In Yersinia pseudotuberculosis serotype O:1b (strain IP 31758), this protein is UPF0225 protein YpsIP31758_1970.